A 273-amino-acid polypeptide reads, in one-letter code: Formamidopyrimidine-DNA glycosylase (273 aa).

The Schiff-base intermediate with DNA role is filled by P2. E3 acts as the Proton donor in catalysis. Residue K58 is the Proton donor; for beta-elimination activity of the active site. DNA contacts are provided by H92, R111, and K153. An FPG-type zinc finger spans residues 238 to 272 (MVYARDGQECLSCSSSIIKTKHSGRSTFYCKSCQK). Catalysis depends on R262, which acts as the Proton donor; for delta-elimination activity.

The protein belongs to the FPG family. Monomer. Zn(2+) is required as a cofactor.

It carries out the reaction Hydrolysis of DNA containing ring-opened 7-methylguanine residues, releasing 2,6-diamino-4-hydroxy-5-(N-methyl)formamidopyrimidine.. The catalysed reaction is 2'-deoxyribonucleotide-(2'-deoxyribose 5'-phosphate)-2'-deoxyribonucleotide-DNA = a 3'-end 2'-deoxyribonucleotide-(2,3-dehydro-2,3-deoxyribose 5'-phosphate)-DNA + a 5'-end 5'-phospho-2'-deoxyribonucleoside-DNA + H(+). Functionally, involved in base excision repair of DNA damaged by oxidation or by mutagenic agents. Acts as a DNA glycosylase that recognizes and removes damaged bases. Has a preference for oxidized purines, such as 7,8-dihydro-8-oxoguanine (8-oxoG). Has AP (apurinic/apyrimidinic) lyase activity and introduces nicks in the DNA strand. Cleaves the DNA backbone by beta-delta elimination to generate a single-strand break at the site of the removed base with both 3'- and 5'-phosphates. This is Formamidopyrimidine-DNA glycosylase from Rickettsia bellii (strain OSU 85-389).